We begin with the raw amino-acid sequence, 336 residues long: Inositol 2-dehydrogenase (336 aa).

Belongs to the Gfo/Idh/MocA family. Homotetramer.

It carries out the reaction myo-inositol + NAD(+) = scyllo-inosose + NADH + H(+). Involved in the oxidation of myo-inositol (MI) to 2-keto-myo-inositol (2KMI or 2-inosose). The chain is Inositol 2-dehydrogenase from Pseudomonas syringae pv. syringae (strain B728a).